The chain runs to 213 residues: Ribosomal RNA small subunit methyltransferase G (213 aa).

Residues Gly77, Met82, 104–106 (EKS), and Arg145 contribute to the S-adenosyl-L-methionine site.

Belongs to the methyltransferase superfamily. RNA methyltransferase RsmG family.

It is found in the cytoplasm. It carries out the reaction guanosine(527) in 16S rRNA + S-adenosyl-L-methionine = N(7)-methylguanosine(527) in 16S rRNA + S-adenosyl-L-homocysteine. Specifically methylates the N7 position of guanine in position 527 of 16S rRNA. The chain is Ribosomal RNA small subunit methyltransferase G from Pelagibacter ubique (strain HTCC1062).